The chain runs to 85 residues: Small ribosomal subunit protein bS16c (85 aa).

The protein belongs to the bacterial ribosomal protein bS16 family.

It localises to the plastid. It is found in the chloroplast. The chain is Small ribosomal subunit protein bS16c from Agrostis stolonifera (Creeping bentgrass).